The following is a 231-amino-acid chain: Lipoprotein-releasing system ATP-binding protein LolD (231 aa).

The ABC transporter domain maps to 11-231 (LRLEGLTRRF…TLRDGKLVPF (221 aa)). Residue 47–54 (APSGTGKS) coordinates ATP.

It belongs to the ABC transporter superfamily. Lipoprotein translocase (TC 3.A.1.125) family. As to quaternary structure, the complex is composed of two ATP-binding proteins (LolD) and two transmembrane proteins (LolC and LolE).

The protein resides in the cell inner membrane. In terms of biological role, part of the ABC transporter complex LolCDE involved in the translocation of mature outer membrane-directed lipoproteins, from the inner membrane to the periplasmic chaperone, LolA. Responsible for the formation of the LolA-lipoprotein complex in an ATP-dependent manner. The sequence is that of Lipoprotein-releasing system ATP-binding protein LolD from Gluconobacter oxydans (strain 621H) (Gluconobacter suboxydans).